Reading from the N-terminus, the 290-residue chain is Ribosomal RNA small subunit methyltransferase A (290 aa).

Residues Asn-27, Leu-29, Gly-54, Glu-75, Asp-100, and Asn-125 each coordinate S-adenosyl-L-methionine.

Belongs to the class I-like SAM-binding methyltransferase superfamily. rRNA adenine N(6)-methyltransferase family. RsmA subfamily.

The protein resides in the cytoplasm. The enzyme catalyses adenosine(1518)/adenosine(1519) in 16S rRNA + 4 S-adenosyl-L-methionine = N(6)-dimethyladenosine(1518)/N(6)-dimethyladenosine(1519) in 16S rRNA + 4 S-adenosyl-L-homocysteine + 4 H(+). Its function is as follows. Specifically dimethylates two adjacent adenosines (A1518 and A1519) in the loop of a conserved hairpin near the 3'-end of 16S rRNA in the 30S particle. May play a critical role in biogenesis of 30S subunits. This Streptococcus agalactiae serotype V (strain ATCC BAA-611 / 2603 V/R) protein is Ribosomal RNA small subunit methyltransferase A.